The following is a 184-amino-acid chain: UPF0397 protein SAS2570 (184 aa).

5 helical membrane passes run 11–31 (VVAIGIGAAVFVILGRFVVIP), 44–64 (AFLALISAIFGPFAGLMTGLV), 77–97 (AWWSWVICSGIIGCLYGWIGL), 111–131 (MIYFNIGQIIANIICWALIAP), and 148–168 (QGVISAVLNIISVGIIGTILL).

This sequence belongs to the UPF0397 family.

The protein resides in the cell membrane. In Staphylococcus aureus (strain MSSA476), this protein is UPF0397 protein SAS2570.